We begin with the raw amino-acid sequence, 245 residues long: Ribonuclease 3 (245 aa).

The RNase III domain occupies 19–148 (FKVFQEKIGI…FIGALYLDQG (130 aa)). A Mg(2+)-binding site is contributed by E61. D65 is a catalytic residue. Mg(2+) is bound by residues D134 and E137. E137 is an active-site residue. One can recognise a DRBM domain in the interval 174–243 (DYKSQLQELI…AAEALKKLKE (70 aa)).

It belongs to the ribonuclease III family. Homodimer. Requires Mg(2+) as cofactor.

It is found in the cytoplasm. It catalyses the reaction Endonucleolytic cleavage to 5'-phosphomonoester.. Functionally, digests double-stranded RNA. Involved in the processing of primary rRNA transcript to yield the immediate precursors to the large and small rRNAs (23S and 16S). Processes some mRNAs, and tRNAs when they are encoded in the rRNA operon. Processes pre-crRNA and tracrRNA of type II CRISPR loci if present in the organism. This chain is Ribonuclease 3, found in Bacillus cereus (strain ATCC 14579 / DSM 31 / CCUG 7414 / JCM 2152 / NBRC 15305 / NCIMB 9373 / NCTC 2599 / NRRL B-3711).